The sequence spans 620 residues: Protein NRT1/ PTR FAMILY 2.13 (620 aa).

Positions 1–32 (MVLEDRKDGSSLPGRSGSFSKSSPSELDVVDP) are disordered. Over residues 10–25 (SSLPGRSGSFSKSSPS) the composition is skewed to low complexity. A run of 12 helical transmembrane segments spans residues 70–90 (LGSI…FHLE), 95–115 (ANVI…GAYI), 126–146 (IAFA…TASF), 167–187 (KLQI…SGGI), 213–233 (FFNW…TVVV), 241–261 (WIIG…MFFA), 364–384 (IVPI…QGTF), 402–422 (IPAG…LPFY), 443–463 (LQRI…AGIV), 485–505 (VFWL…NIIG), 524–544 (SLFS…VTVV), and 568–588 (YFYY…WYCA).

Belongs to the major facilitator superfamily. Proton-dependent oligopeptide transporter (POT/PTR) (TC 2.A.17) family. In terms of assembly, interacts with NLA. Ubiquitinated by NLA. Ubiquitination of NPF2.13 leads to its degradation by the proteasome. As to expression, expressed in leaves and flowers. Detected in stems and siliques. Highest expression in the distal lamina of older leaves. Restricted to the sieve element and companion cell complex of the minor vein.

Its subcellular location is the cell membrane. In terms of biological role, low-affinity proton-dependent nitrate transporter. Not involved in dipeptides transport, but has a weak glucosinolate transport activity. Involved in phloem loading and nitrate remobilization from the older leaves to other tissues. The polypeptide is Protein NRT1/ PTR FAMILY 2.13 (NPF2.13) (Arabidopsis thaliana (Mouse-ear cress)).